The sequence spans 81 residues: ATP synthase subunit c (81 aa).

2 consecutive transmembrane segments (helical) span residues 5–25 (IAAGALIGGGLIMAGGAIGAG) and 57–77 (VGLVEAAYFINLAFMALFVFA).

The protein belongs to the ATPase C chain family. In terms of assembly, F-type ATPases have 2 components, F(1) - the catalytic core - and F(0) - the membrane proton channel. F(1) has five subunits: alpha(3), beta(3), gamma(1), delta(1), epsilon(1). F(0) has three main subunits: a(1), b(2) and c(10-14). The alpha and beta chains form an alternating ring which encloses part of the gamma chain. F(1) is attached to F(0) by a central stalk formed by the gamma and epsilon chains, while a peripheral stalk is formed by the delta and b chains.

The protein resides in the cell membrane. Its function is as follows. F(1)F(0) ATP synthase produces ATP from ADP in the presence of a proton or sodium gradient. F-type ATPases consist of two structural domains, F(1) containing the extramembraneous catalytic core and F(0) containing the membrane proton channel, linked together by a central stalk and a peripheral stalk. During catalysis, ATP synthesis in the catalytic domain of F(1) is coupled via a rotary mechanism of the central stalk subunits to proton translocation. Key component of the F(0) channel; it plays a direct role in translocation across the membrane. A homomeric c-ring of between 10-14 subunits forms the central stalk rotor element with the F(1) delta and epsilon subunits. This chain is ATP synthase subunit c, found in Mycobacterium sp. (strain JLS).